Consider the following 187-residue polypeptide: UPF0301 protein Sala_0165 (187 aa).

The protein belongs to the UPF0301 (AlgH) family.

In Sphingopyxis alaskensis (strain DSM 13593 / LMG 18877 / RB2256) (Sphingomonas alaskensis), this protein is UPF0301 protein Sala_0165.